The chain runs to 134 residues: Large ribosomal subunit protein uL18 (134 aa).

The protein belongs to the universal ribosomal protein uL18 family. In terms of assembly, part of the 50S ribosomal subunit; part of the 5S rRNA/L5/L18/L25 subcomplex. Contacts the 5S and 23S rRNAs.

In terms of biological role, this is one of the proteins that bind and probably mediate the attachment of the 5S RNA into the large ribosomal subunit, where it forms part of the central protuberance. This is Large ribosomal subunit protein uL18 from Corynebacterium efficiens (strain DSM 44549 / YS-314 / AJ 12310 / JCM 11189 / NBRC 100395).